A 103-amino-acid chain; its full sequence is N(4)-acetylcytidine amidohydrolase (103 aa).

The region spanning 6–94 (ITFFQRFQND…IAEIYPNQTQ (89 aa)) is the ASCH domain. The Proton acceptor role is filled by Lys21. The active-site Nucleophile is the Thr24. Glu74 functions as the Proton donor in the catalytic mechanism.

The protein belongs to the N(4)-acetylcytidine amidohydrolase family.

The catalysed reaction is N(4)-acetylcytidine + H2O = cytidine + acetate + H(+). The enzyme catalyses N(4)-acetyl-2'-deoxycytidine + H2O = 2'-deoxycytidine + acetate + H(+). It carries out the reaction N(4)-acetylcytosine + H2O = cytosine + acetate + H(+). Functionally, catalyzes the hydrolysis of N(4)-acetylcytidine (ac4C). This Salmonella heidelberg (strain SL476) protein is N(4)-acetylcytidine amidohydrolase (yqfB).